Reading from the N-terminus, the 111-residue chain is Nucleoid-associated protein NMA1657 (111 aa).

The protein belongs to the YbaB/EbfC family. In terms of assembly, homodimer.

It localises to the cytoplasm. It is found in the nucleoid. Its function is as follows. Binds to DNA and alters its conformation. May be involved in regulation of gene expression, nucleoid organization and DNA protection. This chain is Nucleoid-associated protein NMA1657, found in Neisseria meningitidis serogroup A / serotype 4A (strain DSM 15465 / Z2491).